The primary structure comprises 210 residues: Ribosomal RNA large subunit methyltransferase E (210 aa).

S-adenosyl-L-methionine is bound by residues glycine 67, tryptophan 69, aspartate 87, aspartate 103, and aspartate 128. Lysine 168 functions as the Proton acceptor in the catalytic mechanism.

This sequence belongs to the class I-like SAM-binding methyltransferase superfamily. RNA methyltransferase RlmE family.

Its subcellular location is the cytoplasm. The catalysed reaction is uridine(2552) in 23S rRNA + S-adenosyl-L-methionine = 2'-O-methyluridine(2552) in 23S rRNA + S-adenosyl-L-homocysteine + H(+). Functionally, specifically methylates the uridine in position 2552 of 23S rRNA at the 2'-O position of the ribose in the fully assembled 50S ribosomal subunit. The chain is Ribosomal RNA large subunit methyltransferase E from Psychrobacter arcticus (strain DSM 17307 / VKM B-2377 / 273-4).